The chain runs to 431 residues: Glycerol-3-phosphate dehydrogenase [NAD(P)+] (431 aa).

S79, F80, R100, and K173 together coordinate NADPH. Residues K173 and G201 each contribute to the sn-glycerol 3-phosphate site. A205 is a binding site for NADPH. Residues K256, D309, S319, R320, and N321 each coordinate sn-glycerol 3-phosphate. The active-site Proton acceptor is the K256. R320 lines the NADPH pocket. An NADPH-binding site is contributed by E346.

This sequence belongs to the NAD-dependent glycerol-3-phosphate dehydrogenase family.

The protein localises to the cytoplasm. The enzyme catalyses sn-glycerol 3-phosphate + NAD(+) = dihydroxyacetone phosphate + NADH + H(+). It carries out the reaction sn-glycerol 3-phosphate + NADP(+) = dihydroxyacetone phosphate + NADPH + H(+). Its pathway is membrane lipid metabolism; glycerophospholipid metabolism. Catalyzes the reduction of the glycolytic intermediate dihydroxyacetone phosphate (DHAP) to sn-glycerol 3-phosphate (G3P), the key precursor for phospholipid synthesis. This Psychrobacter cryohalolentis (strain ATCC BAA-1226 / DSM 17306 / VKM B-2378 / K5) protein is Glycerol-3-phosphate dehydrogenase [NAD(P)+].